We begin with the raw amino-acid sequence, 143 residues long: Large ribosomal subunit protein uL11 (143 aa).

It belongs to the universal ribosomal protein uL11 family. Part of the ribosomal stalk of the 50S ribosomal subunit. Interacts with L10 and the large rRNA to form the base of the stalk. L10 forms an elongated spine to which L12 dimers bind in a sequential fashion forming a multimeric L10(L12)X complex. One or more lysine residues are methylated.

Forms part of the ribosomal stalk which helps the ribosome interact with GTP-bound translation factors. The polypeptide is Large ribosomal subunit protein uL11 (Pseudomonas paraeruginosa (strain DSM 24068 / PA7) (Pseudomonas aeruginosa (strain PA7))).